A 231-amino-acid chain; its full sequence is ATP phosphoribosyltransferase (231 aa).

The protein belongs to the ATP phosphoribosyltransferase family. Short subfamily. In terms of assembly, heteromultimer composed of HisG and HisZ subunits.

It localises to the cytoplasm. The catalysed reaction is 1-(5-phospho-beta-D-ribosyl)-ATP + diphosphate = 5-phospho-alpha-D-ribose 1-diphosphate + ATP. It functions in the pathway amino-acid biosynthesis; L-histidine biosynthesis; L-histidine from 5-phospho-alpha-D-ribose 1-diphosphate: step 1/9. Its function is as follows. Catalyzes the condensation of ATP and 5-phosphoribose 1-diphosphate to form N'-(5'-phosphoribosyl)-ATP (PR-ATP). Has a crucial role in the pathway because the rate of histidine biosynthesis seems to be controlled primarily by regulation of HisG enzymatic activity. This is ATP phosphoribosyltransferase from Brucella suis (strain ATCC 23445 / NCTC 10510).